We begin with the raw amino-acid sequence, 872 residues long: Metabotropic glutamate receptor 2 (872 aa).

A signal peptide spans methionine 1 to alanine 18. Residues glutamate 19–alanine 568 lie on the Extracellular side of the membrane. A disulfide bridge links cysteine 50 with cysteine 92. Arginine 57, arginine 61, serine 145, alanine 166, and threonine 168 together coordinate L-glutamate. 2 N-linked (GlcNAc...) asparagine glycosylation sites follow: asparagine 203 and asparagine 286. Intrachain disulfides connect cysteine 234–cysteine 518, cysteine 355–cysteine 362, cysteine 400–cysteine 407, cysteine 500–cysteine 519, cysteine 504–cysteine 522, cysteine 525–cysteine 537, and cysteine 540–cysteine 553. Aspartate 295 contributes to the L-glutamate binding site. An N-linked (GlcNAc...) asparagine glycan is attached at asparagine 338. Lysine 377 is an L-glutamate binding site. An N-linked (GlcNAc...) asparagine glycan is attached at asparagine 402. The N-linked (GlcNAc...) asparagine glycan is linked to asparagine 547. Residues valine 569–phenylalanine 589 form a helical membrane-spanning segment. The Cytoplasmic portion of the chain corresponds to valine 590–glutamate 604. Residues leucine 605 to alanine 625 traverse the membrane as a helical segment. Residues lysine 626–threonine 633 are Extracellular-facing. A disulfide bridge connects residues cysteine 632 and cysteine 721. The chain crosses the membrane as a helical span at residues leucine 634–leucine 651. Residues threonine 652 to glutamine 679 lie on the Cytoplasmic side of the membrane. An important for interaction with HTR2A region spans residues alanine 677 to alanine 685. A helical transmembrane segment spans residues valine 680–valine 700. Residues glutamate 701 to alanine 726 lie on the Extracellular side of the membrane. A helical transmembrane segment spans residues serine 727 to phenylalanine 747. Over lysine 748 to lysine 760 the chain is Cytoplasmic. A helical membrane pass occupies residues phenylalanine 761–tyrosine 781. Residues valine 782–valine 798 lie on the Extracellular side of the membrane. The helical transmembrane segment at serine 799–phenylalanine 819 threads the bilayer. Residues glutamine 820 to leucine 872 are Cytoplasmic-facing.

It belongs to the G-protein coupled receptor 3 family. Forms heterodimers with GRM3 or GRM4. Interacts with GNAI1. Interacts with TAMALIN. Interacts with HTR2A. As to expression, detected in neurons in brain cortex (at protein level).

It localises to the cell membrane. Its subcellular location is the synapse. The protein resides in the cell projection. The protein localises to the dendrite. Functionally, dimeric G protein-coupled receptor which is activated by the excitatory neurotransmitter L-glutamate. Plays critical roles in modulating synaptic transmission and neuronal excitability. Upon activation by glutamate, inhibits presynaptic calcium channels, reducing further glutamate release and dampening excitatory signaling. Mechanistically, ligand binding causes a conformation change that triggers signaling via guanine nucleotide-binding proteins (G proteins) and modulates the activity of down-stream effectors, such as adenylate cyclase. May mediate suppression of neurotransmission or may be involved in synaptogenesis or synaptic stabilization. This Mus musculus (Mouse) protein is Metabotropic glutamate receptor 2 (Grm2).